An 884-amino-acid chain; its full sequence is E3 SUMO-protein ligase SIZ1 (884 aa).

In terms of domain architecture, SAP spans 11–45 (LSYFRIKELKDVLTQLGLSKQGKKQELVDRILTLL). A disordered region spans residues 84–103 (LASKGQVSSDTSNLKVKGEP). Over residues 88-97 (GQVSSDTSNL) the composition is skewed to polar residues. Residue Lys-100 forms a Glycyl lysine isopeptide (Lys-Gly) (interchain with G-Cter in SUMO) linkage. A PHD-type zinc finger spans residues 112–168 (KVRCVCGNSLETDSMIQCEDPRCHVWQHVGCVILPDKPMDGNPPLPESFYCEICRLT). An SP-RING-type zinc finger spans residues 346–429 (SDSDIEVVAD…FNRITSKMKH (84 aa)). Zn(2+)-binding residues include Cys-379, His-381, Cys-402, and Cys-405. Lys-488 is covalently cross-linked (Glycyl lysine isopeptide (Lys-Gly) (interchain with G-Cter in SUMO)). Disordered stretches follow at residues 753 to 778 (PSLQ…ADMS), 792 to 824 (GDSA…MDTT), and 836 to 869 (DSRQ…QTRH). Polar residues-rich tracts occupy residues 766–778 (SAQS…ADMS) and 803–824 (ATTN…MDTT). Over residues 837 to 847 (SRQDKAKKQRS) the composition is skewed to basic and acidic residues.

It belongs to the PIAS family. Interacts (via PHD domain) with SCE1, GTE3 and GTE5. Post-translationally, autosumoylated at Lys-100 and Lys-488. Ubiquitous.

The protein localises to the nucleus speckle. It functions in the pathway protein modification; protein sumoylation. Functionally, E3 SUMO protein ligase involved in regulation processes. Mediates SUMO/ attachment to PHR1, a MYB transcriptional activator controlling the phosphate deficiency responses. Functions as an upstream negative regulator of salicylic acid (SA) accumulation and subsequent SA-mediated systemic acquired resistance (SAR) signaling. Probably not involved in jasmonic acid (JA)-mediated defense response. Participates in abiotic stress-induced sumoylation. Controls heat shock-induced SUMO1 and SUMO2 conjugation and facilitates basal thermotolerance. Involved in freezing tolerance by mediating sumoylation of ICE1, a transcription activator of the cold signaling regulator CBF3/DREB1A. Acts as a positive regulator of drought stress tolerance. Acts as a floral repressor that promotes FLC expression by repressing FLD activity through sumoylation. Acts as a negative regulator of abscisic acid (ABA) signaling through ABI5 sumoylation. Mediates sumoylation of SCE1, GTE3 and GTE5. Functions as a negative regulator of SnRK1 signaling through sumoylation of several components of the SnRK1 complex. In Arabidopsis thaliana (Mouse-ear cress), this protein is E3 SUMO-protein ligase SIZ1.